A 414-amino-acid chain; its full sequence is Cyclin-B1-3 (414 aa).

The protein belongs to the cyclin family. Cyclin AB subfamily. In terms of tissue distribution, expressed in roots, stems and flowers.

This Arabidopsis thaliana (Mouse-ear cress) protein is Cyclin-B1-3 (CYCB1-3).